The sequence spans 188 residues: GMP synthase [glutamine-hydrolyzing] subunit A (188 aa).

The 186-residue stretch at 3-188 (PLYVVNNYGQ…FSICTGQNKG (186 aa)) folds into the Glutamine amidotransferase type-1 domain. Catalysis depends on Cys-75, which acts as the Nucleophile. Catalysis depends on residues His-162 and Glu-164.

As to quaternary structure, heterodimer composed of a glutamine amidotransferase subunit (A) and a GMP-binding subunit (B).

The enzyme catalyses XMP + L-glutamine + ATP + H2O = GMP + L-glutamate + AMP + diphosphate + 2 H(+). Its pathway is purine metabolism; GMP biosynthesis; GMP from XMP (L-Gln route): step 1/1. Its function is as follows. Catalyzes the synthesis of GMP from XMP. The protein is GMP synthase [glutamine-hydrolyzing] subunit A of Methanospirillum hungatei JF-1 (strain ATCC 27890 / DSM 864 / NBRC 100397 / JF-1).